A 135-amino-acid chain; its full sequence is Galectin-1 (135 aa).

A2 is modified (N-acetylalanine). The region spanning 4–135 is the Galectin domain; the sequence is GLVASNLNLK…DFKIKCVAFE (132 aa). N6-acetyllysine is present on residues K13, K19, and K29. S30 carries the post-translational modification Phosphoserine. Residues 45 to 49, H53, N62, and 69 to 72 contribute to the a beta-D-galactoside site; these read HFNPR and WGTE. N6-acetyllysine; alternate is present on K108. Residue K108 is modified to N6-succinyllysine; alternate. The residue at position 128 (K128) is an N6-acetyllysine.

In terms of assembly, homodimer. Binds LGALS3BP. Interacts with CD2, CD3, CD4, CD6, CD7, CD43, ALCAM and CD45. Interacts with laminin (via poly-N-acetyllactosamine). Interacts with SUSD2. Interacts with cargo receptor TMED10; the interaction mediates the translocation from the cytoplasm into the ERGIC (endoplasmic reticulum-Golgi intermediate compartment) and thereby secretion. Interacts with CD69.

It localises to the secreted. The protein localises to the extracellular space. The protein resides in the extracellular matrix. It is found in the cytoplasm. Its function is as follows. Lectin that binds beta-galactoside and a wide array of complex carbohydrates. Plays a role in regulating apoptosis, cell proliferation and cell differentiation. Inhibits CD45 protein phosphatase activity and therefore the dephosphorylation of Lyn kinase. Strong inducer of T-cell apoptosis. Plays a negative role in Th17 cell differentiation via activation of the receptor CD69. This chain is Galectin-1 (Lgals1), found in Mus musculus (Mouse).